The chain runs to 369 residues: Histidinol-phosphate aminotransferase (369 aa).

Positions 1–39 are disordered; it reads MSFGIDDLPVRDELRGKSPYGAPQLDVPVRLNTNENPYP. The residue at position 230 (Lys230) is an N6-(pyridoxal phosphate)lysine.

Belongs to the class-II pyridoxal-phosphate-dependent aminotransferase family. Histidinol-phosphate aminotransferase subfamily. Homodimer. Pyridoxal 5'-phosphate is required as a cofactor.

It carries out the reaction L-histidinol phosphate + 2-oxoglutarate = 3-(imidazol-4-yl)-2-oxopropyl phosphate + L-glutamate. The protein operates within amino-acid biosynthesis; L-histidine biosynthesis; L-histidine from 5-phospho-alpha-D-ribose 1-diphosphate: step 7/9. This Streptomyces avermitilis (strain ATCC 31267 / DSM 46492 / JCM 5070 / NBRC 14893 / NCIMB 12804 / NRRL 8165 / MA-4680) protein is Histidinol-phosphate aminotransferase (hisC).